A 241-amino-acid chain; its full sequence is ATP synthase subunit a (241 aa).

Transmembrane regions (helical) follow at residues 30–50, 91–111, 128–148, 193–213, and 214–234; these read GQVF…ISVG, FIGT…LIPW, INTT…AGLS, LVVG…VMFL, and GLFT…YYIG.

Belongs to the ATPase A chain family. In terms of assembly, F-type ATPases have 2 components, CF(1) - the catalytic core - and CF(0) - the membrane proton channel. CF(1) has five subunits: alpha(3), beta(3), gamma(1), delta(1), epsilon(1). CF(0) has four main subunits: a, b, b' and c.

The protein resides in the cellular thylakoid membrane. Key component of the proton channel; it plays a direct role in the translocation of protons across the membrane. In Prochlorococcus marinus subsp. pastoris (strain CCMP1986 / NIES-2087 / MED4), this protein is ATP synthase subunit a.